The primary structure comprises 241 residues: Ribosome-inactivating protein luffaculin 1 (241 aa).

4 N-linked (GlcNAc...) asparagine glycosylation sites follow: asparagine 28, asparagine 33, asparagine 77, and asparagine 84. Glutamate 159 is an active-site residue. The N-linked (GlcNAc...) asparagine glycan is linked to asparagine 205.

Belongs to the ribosome-inactivating protein family. Type 1 RIP subfamily.

It catalyses the reaction Endohydrolysis of the N-glycosidic bond at one specific adenosine on the 28S rRNA.. This Luffa acutangula (Ridged gourd) protein is Ribosome-inactivating protein luffaculin 1.